A 419-amino-acid chain; its full sequence is Coiled-coil domain-containing protein 85C (419 aa).

At Ala-2 the chain carries N-acetylalanine. 2 coiled-coil regions span residues Glu-22–Cys-88 and His-118–Ala-159. 2 disordered regions span residues Gly-162–Ser-268 and His-307–Lys-348. The segment covering Ala-164 to Gly-175 has biased composition (gly residues). Residues Ser-176 to Pro-189 are compositionally biased toward low complexity. At Ser-178 the chain carries Phosphoserine. Residues Pro-224–His-233 show a composition bias toward pro residues. The residue at position 246 (Ser-246) is a Phosphoserine. Residues His-307–Asn-325 show a composition bias toward polar residues. The segment covering Cys-329–Pro-338 has biased composition (pro residues).

It belongs to the CCDC85 family. In terms of assembly, may interact with ARVCF, CTNND1, CTNND2 and PKP4.

The protein resides in the cell junction. It is found in the tight junction. The protein localises to the adherens junction. May play a role in cell-cell adhesion and epithelium development through its interaction with proteins of the beta-catenin family. May play an important role in cortical development, especially in the maintenance of radial glia. This chain is Coiled-coil domain-containing protein 85C (CCDC85C), found in Homo sapiens (Human).